Consider the following 468-residue polypeptide: Putative magnesium transporter MRS2-G (468 aa).

Disordered regions lie at residues 1–76 and 183–204; these read MGRR…AGKV and GQPG…QVPR. Low complexity-rich tracts occupy residues 14–23 and 31–45; these read ASNASTSSST and RLPS…SSPS. Pro residues predominate over residues 46–67; the sequence is PASPSPPPPSASHPAPPSPPLA. The span at 187–201 shows a compositional bias: basic and acidic residues; that stretch reads GDDHGEKHDDSHGDQ. The next 2 membrane-spanning stretches (helical) occupy residues 402 to 422 and 437 to 457; these read LTLT…GAFA and FFWP…IVLL.

Belongs to the CorA metal ion transporter (MIT) (TC 1.A.35.5) family. In terms of assembly, interacts with CYCB2-2.

It localises to the membrane. Putative magnesium transporter. The sequence is that of Putative magnesium transporter MRS2-G (MRS2-G) from Oryza sativa subsp. japonica (Rice).